Reading from the N-terminus, the 176-residue chain is Large ribosomal subunit protein uL6 (176 aa).

This sequence belongs to the universal ribosomal protein uL6 family. In terms of assembly, part of the 50S ribosomal subunit.

Its function is as follows. This protein binds to the 23S rRNA, and is important in its secondary structure. It is located near the subunit interface in the base of the L7/L12 stalk, and near the tRNA binding site of the peptidyltransferase center. The protein is Large ribosomal subunit protein uL6 of Methanothrix thermoacetophila (strain DSM 6194 / JCM 14653 / NBRC 101360 / PT) (Methanosaeta thermophila).